The following is a 46-amino-acid chain: ATCRKPSMYFSGACFSDTNCQKACNREDWPNGKCLVGFKCECQRPC.

Disulfide bonds link cysteine 3–cysteine 46, cysteine 14–cysteine 34, cysteine 20–cysteine 40, and cysteine 24–cysteine 42.

As to expression, leaves and flowers.

In terms of biological role, strong inhibiting activity against C.beticola and other filamentous fungi. Little or no effect against bacteria. The protein is Defensin-like protein AX2 of Beta vulgaris (Sugar beet).